The primary structure comprises 185 residues: NADH dehydrogenase [ubiquinone] 1 alpha subcomplex assembly factor 3 (185 aa).

Belongs to the NDUFAF3 family. As to quaternary structure, interacts with NDUFAF4, NDUFS2 and NDUFS3. In terms of tissue distribution, strongly expressed in testis and weakly expressed in the epididymis. Expressed in spermatocytes.

The protein resides in the nucleus. It localises to the mitochondrion inner membrane. Essential factor for the assembly of mitochondrial NADH:ubiquinone oxidoreductase complex (complex I). The chain is NADH dehydrogenase [ubiquinone] 1 alpha subcomplex assembly factor 3 (Ndufaf3) from Mus musculus (Mouse).